The primary structure comprises 103 residues: Phosphoribosyl-ATP pyrophosphatase (103 aa).

The protein belongs to the PRA-PH family.

It is found in the cytoplasm. The catalysed reaction is 1-(5-phospho-beta-D-ribosyl)-ATP + H2O = 1-(5-phospho-beta-D-ribosyl)-5'-AMP + diphosphate + H(+). Its pathway is amino-acid biosynthesis; L-histidine biosynthesis; L-histidine from 5-phospho-alpha-D-ribose 1-diphosphate: step 2/9. This is Phosphoribosyl-ATP pyrophosphatase (hisE) from Rhodobacter capsulatus (strain ATCC BAA-309 / NBRC 16581 / SB1003).